A 203-amino-acid polypeptide reads, in one-letter code: E3 ubiquitin-protein ligase RNF152 (203 aa).

The RING-type zinc finger occupies 12–55 (CQICFNYYSPRRRPKLLDCKHTCCSVCLQQMRTSQKDVRCPWCR). The interval 106–165 (ISKERALLPGDMGCRLLPGSQQKSVTVVTIPAEQQPLQGGAPQEAVEEEQDRRGVVKSST) is necessary for interaction with RRAGA. A helical membrane pass occupies residues 167–187 (SGVCTVILVACVLVFLLGIVL).

This sequence belongs to the RNF152 family. As to quaternary structure, interacts with RRAGA (inactive GDP-bound form); stimulated by amino acid starvation. Interacts with SEC16A. Ubiquitinated. Autoubiquitinated in vitro, leading to its degradation by the proteasome. As to expression, widely expressed.

The protein localises to the lysosome membrane. The enzyme catalyses S-ubiquitinyl-[E2 ubiquitin-conjugating enzyme]-L-cysteine + [acceptor protein]-L-lysine = [E2 ubiquitin-conjugating enzyme]-L-cysteine + N(6)-ubiquitinyl-[acceptor protein]-L-lysine.. It participates in protein modification; protein ubiquitination. In terms of biological role, E3 ubiquitin-protein ligase that acts as a negative regulator of mTORC1 signaling by mediating ubiquitination of RagA/RRAGA and RHEB. Catalyzes 'Lys-63'-linked polyubiquitination of RagA/RRAGA in response to amino acid starvation, thereby regulating mTORC1 signaling. Also mediates monoubiquitination of RHEB, promoting its association with the TSC-TBC complex and subsequent inhibition. Also mediates 'Lys-48'-linked polyubiquitination of target proteins and their subsequent targeting to the proteasome for degradation. Induces apoptosis when overexpressed. This Homo sapiens (Human) protein is E3 ubiquitin-protein ligase RNF152.